A 347-amino-acid chain; its full sequence is N-acetyl-gamma-glutamyl-phosphate reductase (347 aa).

The active site involves cysteine 150.

This sequence belongs to the NAGSA dehydrogenase family. Type 1 subfamily.

The protein resides in the cytoplasm. The catalysed reaction is N-acetyl-L-glutamate 5-semialdehyde + phosphate + NADP(+) = N-acetyl-L-glutamyl 5-phosphate + NADPH + H(+). It participates in amino-acid biosynthesis; L-arginine biosynthesis; N(2)-acetyl-L-ornithine from L-glutamate: step 3/4. In terms of biological role, catalyzes the NADPH-dependent reduction of N-acetyl-5-glutamyl phosphate to yield N-acetyl-L-glutamate 5-semialdehyde. In Halothermothrix orenii (strain H 168 / OCM 544 / DSM 9562), this protein is N-acetyl-gamma-glutamyl-phosphate reductase.